A 702-amino-acid polypeptide reads, in one-letter code: MKTVVILAGLVALALSSAVPPPKYQHHYKTSPVDAIFVEKQKKVFSLFKNVNQLDYEAEYYKIGKDYDVEANIDNYSNKKVVEDFLLLYRTGFMPKGFEFSIFYERMREEAIALFELFYYAKDFETFYKTASFARVHVNEGMFLYAYYIAVIQRMDTNGLVLPAPYEVYPQYFTNMEVLFKVDRIKMQDGFLNKDLAAYYGMYHENDNYVFYANYSNSLSYPNEEERIAYFYEDIGLNSYYYYFHMHLPFWWNSEKYGPFKERRGEIYYYFYQQLIARYYLERLTNGLGEIPEFSWYSPVKTGYYPMLYGSYYPFAQRPNYYDIHNDKNYEQIRFLDMFEMTFLQYLQKGHFKAFDKEINFHDVKAVNFVGNYWQANADLYNEEVTKLYQRSYEINARHVLGAAPKPFNKYSFIPSALDFYQTSLRDPVFYQLYDRIINYINEFKQYLQPYNQNDLHFVGVKISDVKVDKLATYFEYYDFDVSNSVFVSKKDIKNFPYGYKVRQPRLNHKPFSVSIGVKSDVAVDAVFKIFLGPKYDSNGFPIPLAKNWNKFYELDWFVHKVMPGQNHIVRQSSDFLFFKEDSLPMSEIYKLLDEGKIPSDMSNSSDTLPQRLMLPRGTKDGYPFQLFVFVYPYQAVPKEMEPFKSIVPDSKPFGYPFDRPVHPEYFKQPNMHFEDVHVYHEGEQFPYKFNVPFYVPQKVEV.

Positions 1–16 (MKTVVILAGLVALALS) are cleaved as a signal peptide. 2 N-linked (GlcNAc...) asparagine glycosylation sites follow: Asn75 and Asn214.

It belongs to the hemocyanin family. Arylphorin is a hexamer of subunits alpha and beta. As to expression, fat body.

It localises to the secreted. The protein resides in the extracellular space. Functionally, arylphorin is a larval storage protein (LSP) which may serve as a storage protein used primarily as a source of aromatic amino acids for protein synthesis during metamorphosis. It is a constituent of the sclerotizing system of the cuticle, and serves as a carrier for ecdysteroid hormone. The protein is Arylphorin subunit alpha of Manduca sexta (Tobacco hawkmoth).